A 501-amino-acid chain; its full sequence is MRPSAPTGLLQQPKPFFMIFFVELWERFGYYGVQGILAVFFVQQLGFSQEQSFITFGAFSALVYGLISVGGYVGDHVLGTKRTMVLGAIVLVIGYFMTGMSIYNPDLIFYALGTIAVGNCLFKANPASLLAKCYERGDPRLDGAFTLFYMSINIGSLISLSLAPVIADHYGYTVTYNLCGVGLVIALLTFFACRHMVRDIGSEPDHLPLDYGKLLLVLLGSVALVFFCAWLMHHVVIANMVLMTVTLAVVIFFFREAFKLDAVARNKMYVAFVLMLEAVVFYVLYAQMPTSLNFFAINNMHHEMLGMSVNPISFQALNPFWVVVGSPVLAMIYTRLGSKGRDLTMPLKFTLGMLFCSLGFLTAAASGIWFADAQGLTSPWFMVLIYLFQSLGELMISALGLAMVAALVPQRLMGFILGMWFLTQAMASLLGGYVATFTAVPQGVTDPLQTLPIYTDVFGKIGLVTLLVAVVMALMVPWLNRMMHAGQGEEGEDLLSQQAKA.

The Cytoplasmic segment spans residues 1–27; that stretch reads MRPSAPTGLLQQPKPFFMIFFVELWER. A helical transmembrane segment spans residues 28–48; that stretch reads FGYYGVQGILAVFFVQQLGFS. Topologically, residues 49 to 52 are periplasmic; it reads QEQS. The helical transmembrane segment at 53 to 73 threads the bilayer; sequence FITFGAFSALVYGLISVGGYV. Residues 74–82 lie on the Cytoplasmic side of the membrane; it reads GDHVLGTKR. Residues 83–103 form a helical membrane-spanning segment; it reads TMVLGAIVLVIGYFMTGMSIY. Residues 104–106 lie on the Periplasmic side of the membrane; the sequence is NPD. Residues 107–127 form a helical membrane-spanning segment; sequence LIFYALGTIAVGNCLFKANPA. At 128-146 the chain is on the cytoplasmic side; sequence SLLAKCYERGDPRLDGAFT. Residues 147–167 form a helical membrane-spanning segment; the sequence is LFYMSINIGSLISLSLAPVIA. The Periplasmic portion of the chain corresponds to 168 to 172; the sequence is DHYGY. A helical membrane pass occupies residues 173–193; that stretch reads TVTYNLCGVGLVIALLTFFAC. Residues 194–211 lie on the Cytoplasmic side of the membrane; it reads RHMVRDIGSEPDHLPLDY. A helical membrane pass occupies residues 212-232; it reads GKLLLVLLGSVALVFFCAWLM. Position 233 (histidine 233) is a topological domain, periplasmic. The helical transmembrane segment at 234-254 threads the bilayer; that stretch reads HVVIANMVLMTVTLAVVIFFF. Over 255-267 the chain is Cytoplasmic; sequence REAFKLDAVARNK. The chain crosses the membrane as a helical span at residues 268 to 288; sequence MYVAFVLMLEAVVFYVLYAQM. Residues 289-311 lie on the Periplasmic side of the membrane; the sequence is PTSLNFFAINNMHHEMLGMSVNP. Residues 312–332 form a helical membrane-spanning segment; the sequence is ISFQALNPFWVVVGSPVLAMI. Residues 333-350 lie on the Cytoplasmic side of the membrane; the sequence is YTRLGSKGRDLTMPLKFT. Residues 351-371 traverse the membrane as a helical segment; the sequence is LGMLFCSLGFLTAAASGIWFA. Residues 372-380 are Periplasmic-facing; sequence DAQGLTSPW. The chain crosses the membrane as a helical span at residues 381–401; the sequence is FMVLIYLFQSLGELMISALGL. At 402–411 the chain is on the cytoplasmic side; the sequence is AMVAALVPQR. A helical membrane pass occupies residues 412–432; that stretch reads LMGFILGMWFLTQAMASLLGG. Over 433-456 the chain is Periplasmic; it reads YVATFTAVPQGVTDPLQTLPIYTD. Residues 457–477 form a helical membrane-spanning segment; the sequence is VFGKIGLVTLLVAVVMALMVP. Topologically, residues 478 to 501 are cytoplasmic; it reads WLNRMMHAGQGEEGEDLLSQQAKA.

This sequence belongs to the major facilitator superfamily. Proton-dependent oligopeptide transporter (POT/PTR) (TC 2.A.17) family. DtpB subfamily.

It localises to the cell inner membrane. Its function is as follows. Proton-dependent permease that transports di- and tripeptides. In Aeromonas hydrophila subsp. hydrophila (strain ATCC 7966 / DSM 30187 / BCRC 13018 / CCUG 14551 / JCM 1027 / KCTC 2358 / NCIMB 9240 / NCTC 8049), this protein is Dipeptide and tripeptide permease B.